The primary structure comprises 151 residues: Probable ubiquitin-conjugating enzyme E2 W-B (151 aa).

The region spanning 3–151 (SMQKRLQKEL…TKWWYHDDTC (149 aa)) is the UBC core domain. Catalysis depends on C91, which acts as the Glycyl thioester intermediate.

This sequence belongs to the ubiquitin-conjugating enzyme family.

Its subcellular location is the nucleus. The catalysed reaction is S-ubiquitinyl-[E1 ubiquitin-activating enzyme]-L-cysteine + [E2 ubiquitin-conjugating enzyme]-L-cysteine = [E1 ubiquitin-activating enzyme]-L-cysteine + S-ubiquitinyl-[E2 ubiquitin-conjugating enzyme]-L-cysteine.. It carries out the reaction S-ubiquitinyl-[E1 ubiquitin-activating enzyme]-L-cysteine + [acceptor protein]-N-terminal-amino acid = [E1 ubiquitin-activating enzyme]-L-cysteine + N-terminal-ubiquitinyl-[acceptor protein].. Its pathway is protein modification; protein ubiquitination. Functionally, accepts ubiquitin from the E1 complex and catalyzes its covalent attachment to other proteins. Catalyzes monoubiquitination. Involved in degradation of misfolded chaperone substrate and DNA repair. This is Probable ubiquitin-conjugating enzyme E2 W-B (ube2wb) from Danio rerio (Zebrafish).